We begin with the raw amino-acid sequence, 634 residues long: DNA gyrase subunit B (634 aa).

Residues 1-220 form an ATPase domain region; it reads MSYDASAIRV…EEVFLDKGGV (220 aa). Residues 221 to 390 are transducer domain; sequence ASFAKALAEG…EAARKARELV (170 aa). The Toprim domain occupies 416–534; it reads AELFIVEGDS…RGHVYIAQPP (119 aa). Residues glutamate 422, aspartate 499, and aspartate 501 each contribute to the Mg(2+) site.

It belongs to the type II topoisomerase GyrB family. Heterotetramer, composed of two GyrA and two GyrB chains. Non-hydrolyzable ATP analogs induce dimerization, novobiocin also induces a small amount of dimerization. The two subunits form an intertwined dimer where the GyrB ATPase transducer helix of 1 subunit connects to the Toprim domain of the other GyrB subunit through a 10 residue linker. In the heterotetramer, GyrA contains the active site tyrosine that forms a covalent intermediate with the DNA, while GyrB binds cofactors and catalyzes ATP hydrolysis. It depends on Mg(2+) as a cofactor. The cofactor is Mn(2+). Ca(2+) is required as a cofactor.

It localises to the cytoplasm. The enzyme catalyses ATP-dependent breakage, passage and rejoining of double-stranded DNA.. Its function is as follows. A type II topoisomerase that negatively supercoils closed circular double-stranded (ds) DNA in an ATP-dependent manner. It probably also catalyzes the interconversion of other topological isomers of double-stranded DNA rings, including catenanes. Relaxes negatively supercoiled DNA in an ATP-independent manner. At comparable concentrations T.thermophilus gyrase does not introduce as many negative supercoils into DNA as the E.coli enzyme. Negative supercoiling favors strand separation, and DNA replication, transcription, recombination and repair, all of which involve strand separation. Type II topoisomerases break and join 2 DNA strands simultaneously in an ATP-dependent manner. This chain is DNA gyrase subunit B, found in Thermus thermophilus (strain ATCC 27634 / DSM 579 / HB8).